The sequence spans 134 residues: MDSRTGELLTYTQCQTGCYFDDIKNPIYFRLQNTTTMATGNKIITLQIRANHNLRKVLGLQICWLNLVVLSVSPRLSGEALLDRFKFHVMKHLNNLGVISINNVIRSINHFIDLFDQRVFYAPSFYYNIKMRLY.

It belongs to the geminiviridae replication enhancer protein family. As to quaternary structure, homooligomer. Interacts with the replication-associated protein (REP). Interacts with host proliferating cell nuclear antigen (PCNA). Interacts with host retinoblastoma-related protein 1 (RBR1), and may thereby deregulate the host cell cycle. Oligomerization and interaction with PCNA are necessary for optimal replication enhancement.

In terms of biological role, increases viral DNA accumulation. Enhances infectivity and symptom expression. The polypeptide is Replication enhancer protein (Tomato pseudo-curly top virus (TPCTV)).